A 262-amino-acid chain; its full sequence is Eukaryotic translation initiation factor 3 subunit G (262 aa).

Positions 182-260 (NTCRVTNLPQ…MVLKVEWTRP (79 aa)) constitute an RRM domain.

It belongs to the eIF-3 subunit G family. Component of the eukaryotic translation initiation factor 3 (eIF-3) complex.

It localises to the cytoplasm. Functionally, RNA-binding component of the eukaryotic translation initiation factor 3 (eIF-3) complex, which is involved in protein synthesis of a specialized repertoire of mRNAs and, together with other initiation factors, stimulates binding of mRNA and methionyl-tRNAi to the 40S ribosome. The eIF-3 complex specifically targets and initiates translation of a subset of mRNAs involved in cell proliferation. This subunit can bind 18S rRNA. Binds to GC-rich 5'UTRs in cholinergic motor neurons, thereby may play a role in translational regulation of mRNAs involved in neuropeptide signaling and stress response, including hlh-30 isoform d and ncs-2. The chain is Eukaryotic translation initiation factor 3 subunit G from Caenorhabditis elegans.